A 338-amino-acid polypeptide reads, in one-letter code: STEAP1 protein (338 aa).

Helical transmembrane passes span 70–90 (WHLPIKIAAIVSSLTFLYTLL) and 118–138 (PMVSITLLALVYLPGVIAAIV). Positions 117 to 264 (LPMVSITLLA…TLGIVSLLLG (148 aa)) constitute a Ferric oxidoreductase domain. Gln139 and Arg160 together coordinate FAD. 4 helical membrane-spanning segments follow: residues 163 to 183 (FGLLSFFFAVLHAVYSLSYPM), 217 to 237 (IYVSLGIVTLAILALLAVTSI), 252 to 272 (IQSTLGIVSLLLGTIHALIFA), and 290 to 310 (FMIAVFLPTVVLICKVILLLP). His174 serves as a coordination point for heme b. 2 residues coordinate FAD: Ser236 and Gln253. His267 contacts heme b.

This sequence belongs to the STEAP family. Homotrimer. It depends on FAD as a cofactor. The cofactor is heme b.

It is found in the endosome membrane. Its subcellular location is the cell membrane. Its function is as follows. Does not function as a metalloreductase due to the absence of binding sites for the electron-donating substrate NADPH. This is STEAP1 protein (STEAP1) from Sus scrofa (Pig).